A 75-amino-acid chain; its full sequence is Small ribosomal subunit protein bS18 (75 aa).

Belongs to the bacterial ribosomal protein bS18 family. As to quaternary structure, part of the 30S ribosomal subunit. Forms a tight heterodimer with protein bS6.

Functionally, binds as a heterodimer with protein bS6 to the central domain of the 16S rRNA, where it helps stabilize the platform of the 30S subunit. The protein is Small ribosomal subunit protein bS18 of Desulforudis audaxviator (strain MP104C).